The primary structure comprises 426 residues: Glutamate-1-semialdehyde 2,1-aminomutase (426 aa).

The residue at position 265 (lysine 265) is an N6-(pyridoxal phosphate)lysine.

Belongs to the class-III pyridoxal-phosphate-dependent aminotransferase family. HemL subfamily. In terms of assembly, homodimer. Pyridoxal 5'-phosphate serves as cofactor.

It localises to the cytoplasm. The enzyme catalyses (S)-4-amino-5-oxopentanoate = 5-aminolevulinate. Its pathway is porphyrin-containing compound metabolism; protoporphyrin-IX biosynthesis; 5-aminolevulinate from L-glutamyl-tRNA(Glu): step 2/2. In Salmonella enteritidis PT4 (strain P125109), this protein is Glutamate-1-semialdehyde 2,1-aminomutase.